Here is a 236-residue protein sequence, read N- to C-terminus: tRNA (guanine-N(7)-)-methyltransferase (236 aa).

Positions 35, 60, 87, and 113 each coordinate S-adenosyl-L-methionine. The active site involves D113. Positions 117 and 149 each coordinate substrate. The interval 217 to 236 (EFEQHWQEIDNPGNAPTPDA) is disordered.

This sequence belongs to the class I-like SAM-binding methyltransferase superfamily. TrmB family.

The enzyme catalyses guanosine(46) in tRNA + S-adenosyl-L-methionine = N(7)-methylguanosine(46) in tRNA + S-adenosyl-L-homocysteine. It functions in the pathway tRNA modification; N(7)-methylguanine-tRNA biosynthesis. Catalyzes the formation of N(7)-methylguanine at position 46 (m7G46) in tRNA. This is tRNA (guanine-N(7)-)-methyltransferase from Synechococcus sp. (strain CC9902).